Consider the following 653-residue polypeptide: Chaperone protein DnaK (653 aa).

At T198 the chain carries Phosphothreonine; by autocatalysis. Over residues 608–617 (DPEAAAHAAG) the composition is skewed to low complexity. The interval 608-653 (DPEAAAHAAGMHGGAATGGGDGANKHGKGAEDVVEAEFEEVNDDKK) is disordered. Residues 618–629 (MHGGAATGGGDG) are compositionally biased toward gly residues. Residues 639–653 (DVVEAEFEEVNDDKK) are compositionally biased toward acidic residues.

This sequence belongs to the heat shock protein 70 family.

Functionally, acts as a chaperone. This is Chaperone protein DnaK from Magnetococcus marinus (strain ATCC BAA-1437 / JCM 17883 / MC-1).